A 757-amino-acid polypeptide reads, in one-letter code: Catalase-peroxidase (757 aa).

The disordered stretch occupies residues 1 to 28; the sequence is MENQSNDISKCPFHNGSMDNQAASGTKN. Residues 17 to 28 show a composition bias toward polar residues; that stretch reads SMDNQAASGTKN. The segment at residues 100–247 is a cross-link (tryptophyl-tyrosyl-methioninium (Trp-Tyr) (with M-273)); that stretch reads WHSAGTYRVH…LAAVQMGLIY (148 aa). His-101 functions as the Proton acceptor in the catalytic mechanism. Positions 247 to 273 form a cross-link, tryptophyl-tyrosyl-methioninium (Tyr-Met) (with W-100); it reads YVNPEGPDGNPDPILAAKDIRDTFGRM. His-288 contacts heme b.

Belongs to the peroxidase family. Peroxidase/catalase subfamily. As to quaternary structure, homodimer or homotetramer. The cofactor is heme b. In terms of processing, formation of the three residue Trp-Tyr-Met cross-link is important for the catalase, but not the peroxidase activity of the enzyme.

It carries out the reaction H2O2 + AH2 = A + 2 H2O. The enzyme catalyses 2 H2O2 = O2 + 2 H2O. Functionally, bifunctional enzyme with both catalase and broad-spectrum peroxidase activity. This is Catalase-peroxidase from Flavobacterium johnsoniae (strain ATCC 17061 / DSM 2064 / JCM 8514 / BCRC 14874 / CCUG 350202 / NBRC 14942 / NCIMB 11054 / UW101) (Cytophaga johnsonae).